Consider the following 334-residue polypeptide: Holliday junction branch migration complex subunit RuvB (334 aa).

The tract at residues 4-184 is large ATPase domain (RuvB-L); it reads ADRLIAADAQ…FGIVQRLEFY (181 aa). ATP is bound by residues isoleucine 23, arginine 24, glycine 65, lysine 68, threonine 69, threonine 70, 131–133, arginine 174, tyrosine 184, and arginine 221; that span reads EDY. Residue threonine 69 participates in Mg(2+) binding. The small ATPAse domain (RuvB-S) stretch occupies residues 185-255; sequence QVADLQHIVG…VAAQALNMLD (71 aa). A head domain (RuvB-H) region spans residues 258–334; it reads AAGFDYMDRK…YQHFGIDRAE (77 aa). Residues arginine 294, arginine 313, and arginine 318 each contribute to the DNA site.

It belongs to the RuvB family. Homohexamer. Forms an RuvA(8)-RuvB(12)-Holliday junction (HJ) complex. HJ DNA is sandwiched between 2 RuvA tetramers; dsDNA enters through RuvA and exits via RuvB. An RuvB hexamer assembles on each DNA strand where it exits the tetramer. Each RuvB hexamer is contacted by two RuvA subunits (via domain III) on 2 adjacent RuvB subunits; this complex drives branch migration. In the full resolvosome a probable DNA-RuvA(4)-RuvB(12)-RuvC(2) complex forms which resolves the HJ.

Its subcellular location is the cytoplasm. The catalysed reaction is ATP + H2O = ADP + phosphate + H(+). In terms of biological role, the RuvA-RuvB-RuvC complex processes Holliday junction (HJ) DNA during genetic recombination and DNA repair, while the RuvA-RuvB complex plays an important role in the rescue of blocked DNA replication forks via replication fork reversal (RFR). RuvA specifically binds to HJ cruciform DNA, conferring on it an open structure. The RuvB hexamer acts as an ATP-dependent pump, pulling dsDNA into and through the RuvAB complex. RuvB forms 2 homohexamers on either side of HJ DNA bound by 1 or 2 RuvA tetramers; 4 subunits per hexamer contact DNA at a time. Coordinated motions by a converter formed by DNA-disengaged RuvB subunits stimulates ATP hydrolysis and nucleotide exchange. Immobilization of the converter enables RuvB to convert the ATP-contained energy into a lever motion, pulling 2 nucleotides of DNA out of the RuvA tetramer per ATP hydrolyzed, thus driving DNA branch migration. The RuvB motors rotate together with the DNA substrate, which together with the progressing nucleotide cycle form the mechanistic basis for DNA recombination by continuous HJ branch migration. Branch migration allows RuvC to scan DNA until it finds its consensus sequence, where it cleaves and resolves cruciform DNA. This is Holliday junction branch migration complex subunit RuvB from Edwardsiella ictaluri (strain 93-146).